The sequence spans 295 residues: Protease HtpX (295 aa).

The next 2 helical transmembrane spans lie at 5–25 (VILF…SMRL) and 43–63 (ALLI…LAIS). H148 lines the Zn(2+) pocket. Residue E149 is part of the active site. H152 provides a ligand contact to Zn(2+). 2 helical membrane passes run 159 to 179 (VTLA…ARII) and 198 to 218 (FFIT…LIVL). E225 lines the Zn(2+) pocket.

Belongs to the peptidase M48B family. Zn(2+) is required as a cofactor.

It localises to the cell inner membrane. This chain is Protease HtpX, found in Nitrosococcus oceani (strain ATCC 19707 / BCRC 17464 / JCM 30415 / NCIMB 11848 / C-107).